Consider the following 499-residue polypeptide: Glycerol kinase (499 aa).

Thr-13 is an ADP binding site. Residues Thr-13, Thr-14, and Ser-15 each contribute to the ATP site. Thr-13 contributes to the sn-glycerol 3-phosphate binding site. Position 17 (Arg-17) interacts with ADP. Positions 83, 84, 135, and 244 each coordinate sn-glycerol 3-phosphate. Residues Arg-83, Glu-84, Tyr-135, Asp-244, and Gln-245 each coordinate glycerol. ADP is bound by residues Thr-266 and Gly-310. ATP contacts are provided by Thr-266, Gly-310, Gln-314, and Gly-411. ADP-binding residues include Gly-411 and Asn-415.

The protein belongs to the FGGY kinase family.

The enzyme catalyses glycerol + ATP = sn-glycerol 3-phosphate + ADP + H(+). Its pathway is polyol metabolism; glycerol degradation via glycerol kinase pathway; sn-glycerol 3-phosphate from glycerol: step 1/1. With respect to regulation, inhibited by fructose 1,6-bisphosphate (FBP). In terms of biological role, key enzyme in the regulation of glycerol uptake and metabolism. Catalyzes the phosphorylation of glycerol to yield sn-glycerol 3-phosphate. This Pseudothermotoga lettingae (strain ATCC BAA-301 / DSM 14385 / NBRC 107922 / TMO) (Thermotoga lettingae) protein is Glycerol kinase.